A 259-amino-acid chain; its full sequence is uncharacterized protein (259 aa).

The stretch at 158 to 187 forms a coiled coil; the sequence is VELHLKIIEEDMKETTKKNKEKKQNSQSQE. Over residues 172–181 the composition is skewed to basic and acidic residues; it reads TTKKNKEKKQ. Disordered regions lie at residues 172–197 and 217–240; these read TTKK…MEVS and PVKK…QLSK. 2 stretches are compositionally biased toward low complexity: residues 182 to 193 and 217 to 226; these read NSQSQEISNSIE and PVKKTSSASK.

This is an uncharacterized protein from Acanthamoeba polyphaga mimivirus (APMV).